We begin with the raw amino-acid sequence, 194 residues long: Peptidyl-tRNA hydrolase (194 aa).

Tyrosine 16 is a binding site for tRNA. Histidine 21 serves as the catalytic Proton acceptor. TRNA contacts are provided by phenylalanine 67, asparagine 69, and asparagine 115.

Belongs to the PTH family. As to quaternary structure, monomer.

It localises to the cytoplasm. The enzyme catalyses an N-acyl-L-alpha-aminoacyl-tRNA + H2O = an N-acyl-L-amino acid + a tRNA + H(+). Hydrolyzes ribosome-free peptidyl-tRNAs (with 1 or more amino acids incorporated), which drop off the ribosome during protein synthesis, or as a result of ribosome stalling. Functionally, catalyzes the release of premature peptidyl moieties from peptidyl-tRNA molecules trapped in stalled 50S ribosomal subunits, and thus maintains levels of free tRNAs and 50S ribosomes. In Klebsiella pneumoniae (strain 342), this protein is Peptidyl-tRNA hydrolase.